The chain runs to 958 residues: Nuclear factor NF-kappa-B p100 subunit (958 aa).

The 191-residue stretch at 40–230 (LLMSYLSIIE…DPIHDSKSPG (191 aa)) folds into the RHD domain. The short motif at 343–347 (RKRRK) is the Nuclear localization signal element. Disordered regions lie at residues 350 to 374 (PTFN…SFGQ) and 411 to 442 (CSAT…QTDS). The interval 352-390 (FNNHFYGGGSPMGGAPPGSSFGQGGGSNINYQYTGMNSA) is GRR. Over residues 357-374 (YGGGSPMGGAPPGSSFGQ) the composition is skewed to gly residues. Residues 412–425 (SATNSSEKNQQPSI) show a composition bias toward polar residues. 6 ANK repeats span residues 500 to 529 (NGDT…SIPN), 539 to 568 (LQQT…DPTI), 572 to 603 (YGNS…QKNL), 610 to 639 (HGLS…NVNS), 644 to 674 (SGKS…DINA), and 678 to 707 (GGNT…NVLS). Residues 705–766 (VLSENDEPVN…SAEEMHRREQ (62 aa)) form a disordered region. A compositionally biased stretch (acidic residues) spans 724–734 (SESDSDVQMDT). Basic and acidic residues predominate over residues 753-766 (ECEHSAEEMHRREQ). Positions 815 to 901 (VNVLALETNT…EGVELLCKSE (87 aa)) constitute a Death domain. The span at 904-916 (AKHHSPAESKNDS) shows a compositional bias: basic and acidic residues. The tract at residues 904-958 (AKHHSPAESKNDSAYESQSMEVDQSSGNLMDDSQKQTIPVSAAELCPTTEPTIGQ) is disordered. The segment covering 917-931 (AYESQSMEVDQSSGN) has biased composition (polar residues).

Active NF-kappa-B is a heterodimer of an about 52 kDa DNA-binding subunit and the weak DNA-binding subunit p65. Two heterodimers might form a labile tetramer. While translation occurs, the particular unfolded structure after the GRR repeat promotes the generation of p52 making it an acceptable substrate for the proteasome. This process is known as cotranslational processing. The processed form is active and the unprocessed form acts as an inhibitor (I kappa B-like), being able to form cytosolic complexes with NF-kappa B, trapping it in the cytoplasm. Complete folding of the region downstream of the GRR repeat precludes processing. Post-translationally, constitutive processing is tightly suppressed by its C-terminal processing inhibitory domain, named PID, which contains the death domain. As to expression, expressed in spleen.

Its subcellular location is the nucleus. It is found in the cytoplasm. In terms of biological role, appears to have dual functions such as cytoplasmic retention of attached NF-kappa-B proteins and generation of p52 by a cotranslational processing. The proteasome-mediated process ensures the production of both p52 and p100 and preserves their independent function. p52 binds to the kappa-B consensus sequence 5'-GGRNNYYCC-3', located in the enhancer region of genes involved in immune response and acute phase reactions. In concert with RELB, may play a role in the regulation of the circadian clock. The sequence is that of Nuclear factor NF-kappa-B p100 subunit (nfkb2) from Xenopus laevis (African clawed frog).